Reading from the N-terminus, the 523-residue chain is 2-isopropylmalate synthase (523 aa).

The 263-residue stretch at 5 to 267 folds into the Pyruvate carboxyltransferase domain; sequence VIIFDTTLRD…HTAINHQEIW (263 aa). The Mn(2+) site is built by D14, H202, H204, and N238. Positions 392 to 523 are regulatory domain; it reads RLDYFSVQSS…QHNENNKETV (132 aa).

Belongs to the alpha-IPM synthase/homocitrate synthase family. LeuA type 1 subfamily. As to quaternary structure, homodimer. The cofactor is Mn(2+).

The protein localises to the cytoplasm. It catalyses the reaction 3-methyl-2-oxobutanoate + acetyl-CoA + H2O = (2S)-2-isopropylmalate + CoA + H(+). Its pathway is amino-acid biosynthesis; L-leucine biosynthesis; L-leucine from 3-methyl-2-oxobutanoate: step 1/4. In terms of biological role, catalyzes the condensation of the acetyl group of acetyl-CoA with 3-methyl-2-oxobutanoate (2-ketoisovalerate) to form 3-carboxy-3-hydroxy-4-methylpentanoate (2-isopropylmalate). The chain is 2-isopropylmalate synthase from Shigella dysenteriae serotype 1 (strain Sd197).